The following is a 226-amino-acid chain: PKHD-type hydroxylase AZC_3753 (226 aa).

The Fe2OG dioxygenase domain maps to Arg-78–Ser-178. His-96, Asp-98, and His-159 together coordinate Fe cation. Arg-169 is a binding site for 2-oxoglutarate.

Fe(2+) is required as a cofactor. The cofactor is L-ascorbate.

This Azorhizobium caulinodans (strain ATCC 43989 / DSM 5975 / JCM 20966 / LMG 6465 / NBRC 14845 / NCIMB 13405 / ORS 571) protein is PKHD-type hydroxylase AZC_3753.